The following is a 266-amino-acid chain: MEKTQDRDTLSGRMEAEGSLNSEELPPHPQSPPPPPSPRSPTSPVTPELPQPNAPTEVEARQLLVEEWGPLSGKLELPPRISWQLLFLERPLYRNLLSSPNPEGINIYQPAPPTGPTRKPLKELGNFRGWYITTQNLQGPLSWTVKEQCVNLLAKKLWEELLDDEQPDITIMDWFEDSRLDQCVYELHVWLLAADRRTVIAQHHVAPRTNGRGPPGRWIQVSHVFRQYGPGVRFVYFQHKAKNRMEPGGLRRTRVTDSSVSVQLRE.

Over residues 1–16 (MEKTQDRDTLSGRMEA) the composition is skewed to basic and acidic residues. The interval 1-53 (MEKTQDRDTLSGRMEAEGSLNSEELPPHPQSPPPPPSPRSPTSPVTPELPQPN) is disordered. Positions 27-41 (PHPQSPPPPPSPRSP) are enriched in pro residues. 4 positions are modified to phosphoserine: serine 31, serine 37, serine 40, and serine 43. Threonine 46 is modified (phosphothreonine). The 179-residue stretch at 86–264 (LFLERPLYRN…VTDSSVSVQL (179 aa)) folds into the FBA domain.

In terms of tissue distribution, strongly expressed in kidney. Weakly expressed in stomach, colon, duodenum and prostate.

It localises to the cytoplasm. In terms of biological role, promotes cell proliferation. This is F-box only protein 50 (Nccrp1) from Mus musculus (Mouse).